The chain runs to 171 residues: Alpha-amylase/trypsin inhibitor CMd (171 aa).

An N-terminal signal peptide occupies residues 1–24; sequence MACKSSRSLLLLATVMVSVFAAAA.

The protein belongs to the protease inhibitor I6 (cereal trypsin/alpha-amylase inhibitor) family. Heterotetramer of one CMa, one CMb and two CMd chains. In terms of processing, five disulfide bonds, which are essential for the inhibitor activity, are probably present. As to expression, endosperm.

The protein localises to the secreted. Its function is as follows. Part of a complex with inhibitory activity, but CMd is inactive as a separate subunit. The polypeptide is Alpha-amylase/trypsin inhibitor CMd (IAT3) (Hordeum vulgare (Barley)).